The primary structure comprises 212 residues: Dephospho-CoA kinase (212 aa).

Positions 3–207 (IIGLTGGIAS…RHLADDPEPG (205 aa)) constitute a DPCK domain. 11 to 16 (ASGKST) contacts ATP.

It belongs to the CoaE family.

The protein localises to the cytoplasm. It catalyses the reaction 3'-dephospho-CoA + ATP = ADP + CoA + H(+). Its pathway is cofactor biosynthesis; coenzyme A biosynthesis; CoA from (R)-pantothenate: step 5/5. Functionally, catalyzes the phosphorylation of the 3'-hydroxyl group of dephosphocoenzyme A to form coenzyme A. The chain is Dephospho-CoA kinase from Moorella thermoacetica (strain ATCC 39073 / JCM 9320).